Consider the following 386-residue polypeptide: Acyl-CoA ligase lcsD (386 aa).

Positions 62-132 are SBD1; the sequence is ELEQTLLAIQ…ELLPACKIIQ (71 aa). 107–115 contacts ATP; the sequence is AVGASGISK. An SBD2 region spans residues 133–195; it reads GYGMTETTGV…LRSPSVVIGY (63 aa). Thr137 provides a ligand contact to substrate. ATP is bound by residues Asp216 and Arg235. CoA contacts are provided by residues 243–245 and 313–316; these read RGL and HLDG. Residue Lys331 coordinates ATP. The segment at 352 to 386 is disordered; it reads REKAANGVHKVHVNGVKRPEKMEVFDLSSDDEDDD.

The protein belongs to the ATP-dependent AMP-binding enzyme family.

The protein operates within secondary metabolite biosynthesis. Functionally, acyl-CoA ligase; part of the gene cluster that mediates the biosynthesis of the lipopeptide antibiotics leucinostatins that show extensive biological activities, including antimalarial, antiviral, antibacterial, antifungal, and antitumor activities, as well as phytotoxic. Leucinostatin A contains nine amino acid residues, including the unusual amino acid 4-methyl-L-proline (MePro), 2-amino-6-hydroxy-4-methyl-8-oxodecanoic acid (AHyMeOA), 3-hydroxyleucine (HyLeu), alpha-aminoisobutyric acid (AIB), beta-Ala, a 4-methylhex-2-enoic acid at the N-terminus as well as a N1,N1-dimethylpropane-1,2-diamine (DPD) at the C-terminus. The biosynthesis of leucinostatins is probably initiated with the assembly of 4-methylhex-2-enoic acid by a reducing PKS. Two reducing polyketide synthases, lcsB and lcsC, have been identified in the cluster and it is not clear which is the one that assembles 4-methylhex-2-enoic acid since both contain KS, AT, DH, cMT, ER, KR and ACP domains. The polyketide residue might be transferred to the NRPS lcsA, mediated by two additional enzymes, the acyl-CoA ligase lcsD and the thioesterase lcsE. The linear polyketide carboxylic acid, which is released from PKS, is converted to a CoA thioester by lcsD, and then lcsE hydrolyzes the thiol bond and shuttles the polyketide intermediate to lcsA. The C domain of the first module catalyzed the condensation of 4-methylhex-2-enoic acid and MePro carried by domain A1, followed by successive condensations of nine amino acids to trigger the elongation of the linear peptide. A5 and A6 domains of lcsA are proposed to incorporate leucine, A2 AHyMeOA, and A3 incorporates HyLeu. A4, A7 and A8 incorporate AIB. The AHyMeOA in leucinostatin A activated by the A2 might be produced by the second PKS (lcsB or lcsC) present within the cluster. The MePro is probably produced via leucine cyclization and may originate from a separate pathway, independent of the cluster. Another nonproteinogenic amino acid, beta-Ala, could be produced by an aspartic acid decarboxylase also localized outside of the cluster. Two candidates are VFPBJ_01400 and VFPBJ_10476. The final peptide scaffold may be released by the NAD(P)H-dependent thioester reductase (TE) at the C-terminal region of lcsA. Transamination of the lcsA product by the transaminase lcsP may produce DPD at the C-terminus. Further hydroxylation steps performed alternatively by the cytochrome P450 monooxygenases lcsI, lcsK and lcsN then yield the non-methylated leucinostatins precursor. It is also possible that leucines can be hydroxylated prior to their incorporation into the peptide. Varying extents of methylation then lead to the formation of leucinostatins A and B. In Purpureocillium lilacinum (Paecilomyces lilacinus), this protein is Acyl-CoA ligase lcsD.